We begin with the raw amino-acid sequence, 250 residues long: Anamorsin homolog 2 (250 aa).

Residues 1–102 (MNLKITINQQ…QTKKINIPQQ (102 aa)) form an N-terminal SAM-like domain region. A linker region spans residues 102 to 149 (QDFNNCYGKYDYIEQKFQNQINFFKQVDLKGNQETIDENELLNDGVEV). Cys155, Cys162, Cys165, and Cys167 together coordinate [2Fe-2S] cluster. The interval 155-167 (CASKPRACANCTC) is fe-S binding site A. Residues Cys193, Cys196, Cys204, and Cys207 each contribute to the [4Fe-4S] cluster site. Short sequence motifs (cx2C motif) lie at residues 193-196 (CGSC) and 204-207 (CANC). A fe-S binding site B region spans residues 193-207 (CGSCYLGDAFRCANC).

The protein belongs to the anamorsin family. Monomer. Requires [2Fe-2S] cluster as cofactor. The cofactor is [4Fe-4S] cluster.

It localises to the cytoplasm. It is found in the mitochondrion intermembrane space. Its function is as follows. Component of the cytosolic iron-sulfur (Fe-S) protein assembly (CIA) machinery. Required for the maturation of extramitochondrial Fe-S proteins. Part of an electron transfer chain functioning in an early step of cytosolic Fe-S biogenesis, facilitating the de novo assembly of a [4Fe-4S] cluster on the cytosolic Fe-S scaffold complex. Electrons are transferred from NADPH via a FAD- and FMN-containing diflavin oxidoreductase. Together with the diflavin oxidoreductase, also required for the assembly of the diferric tyrosyl radical cofactor of ribonucleotide reductase (RNR), probably by providing electrons for reduction during radical cofactor maturation in the catalytic small subunit. The protein is Anamorsin homolog 2 of Paramecium tetraurelia.